Reading from the N-terminus, the 653-residue chain is Ran-binding protein 9 (653 aa).

Residues M1–A21 show a composition bias toward pro residues. The interval M1 to D62 is disordered. Residues S22 to P57 are compositionally biased toward low complexity. The 188-residue stretch at L72 to F259 folds into the B30.2/SPRY domain. Residues W290–V322 enclose the LisH domain. Positions L326–R332 are interaction with CALB1. In terms of domain architecture, CTLH spans S328–V385. K330 bears the N6-acetyllysine mark. A disordered region spans residues R386 to L422. Residues S398–S421 are compositionally biased toward low complexity. 2 positions are modified to phosphoserine: S402 and S412. The segment at A539–H653 is interaction with FMR1.

Belongs to the RANBP9/10 family. Part of a complex consisting of RANBP9, MKLN1 and GID8. Identified in the CTLH complex that contains GID4, RANBP9 and/or RANBP10, MKLN1, MAEA, RMND5A (or alternatively its paralog RMND5B), GID8, ARMC8, WDR26 and YPEL5. Within this complex, MAEA, RMND5A (or alternatively its paralog RMND5B), GID8, WDR26, and RANBP9 and/or RANBP10 form the catalytic core, while GID4, MKLN1, ARMC8 and YPEL5 have ancillary roles. Interacts with GTP-bound Ran, AR, CDC2L1/p110C, CALB1, S100A7, USP11, SOS1 or SOS2, GID8, and FMR1. Interacts with the Dyrk kinases HIPK2, DYRK1A, and DYRK1B. Interacts with TP73 isoform Alpha but not with TP53. Interacts with the HGF receptor MET and the integrins ITGB1 and ITGB2, but not with ITGAL. Part of a complex consisting of RANBP9, RAN, DYRK1B and COPS5. Directly interacts with RANBP10. Interacts with YPEL5. Interacts with MKLN1. Interacts with DDX4. Interacts with NGFR. Interacts with Tex19.1 and, probably, Tex19.2. Post-translationally, phosphorylated in response to stress. In terms of processing, ubiquitinated. Polyubiquitination targets the protein for rapid degradation via the ubiquitin system. Ubiquitously expressed, with highest levels in maturating spermatocytes.

Its subcellular location is the cytoplasm. The protein localises to the cell membrane. It localises to the nucleus. In terms of biological role, may act as scaffolding protein, and as adapter protein to couple membrane receptors to intracellular signaling pathways. Acts as a mediator of cell spreading and actin cytoskeleton rearrangement. Core component of the CTLH E3 ubiquitin-protein ligase complex that selectively accepts ubiquitin from UBE2H and mediates ubiquitination and subsequent proteasomal degradation of the transcription factor HBP1. May be involved in signaling of ITGB2/LFA-1 and other integrins. Enhances HGF-MET signaling by recruiting Sos and activating the Ras pathway. Enhances dihydrotestosterone-induced transactivation activity of AR, as well as dexamethasone-induced transactivation activity of NR3C1, but not affect estrogen-induced transactivation. Stabilizes TP73 isoform Alpha, probably by inhibiting its ubiquitination, and increases its proapoptotic activity. Inhibits the kinase activity of DYRK1A and DYRK1B. Inhibits FMR1 binding to RNA. The protein is Ran-binding protein 9 of Mus musculus (Mouse).